The chain runs to 643 residues: Phosphomethylpyrimidine synthase (643 aa).

Substrate contacts are provided by residues N248, M277, Y306, H342, 362 to 364 (SRG), 403 to 406 (DGLR), and E442. H446 serves as a coordination point for Zn(2+). Position 469 (Y469) interacts with substrate. H510 contacts Zn(2+). The [4Fe-4S] cluster site is built by C590, C593, and C598.

This sequence belongs to the ThiC family. As to quaternary structure, homodimer. [4Fe-4S] cluster is required as a cofactor.

It carries out the reaction 5-amino-1-(5-phospho-beta-D-ribosyl)imidazole + S-adenosyl-L-methionine = 4-amino-2-methyl-5-(phosphooxymethyl)pyrimidine + CO + 5'-deoxyadenosine + formate + L-methionine + 3 H(+). It functions in the pathway cofactor biosynthesis; thiamine diphosphate biosynthesis. In terms of biological role, catalyzes the synthesis of the hydroxymethylpyrimidine phosphate (HMP-P) moiety of thiamine from aminoimidazole ribotide (AIR) in a radical S-adenosyl-L-methionine (SAM)-dependent reaction. The sequence is that of Phosphomethylpyrimidine synthase from Burkholderia orbicola (strain MC0-3).